A 250-amino-acid chain; its full sequence is PHD finger protein ALFIN-LIKE 3 (250 aa).

Methionine 1 carries the post-translational modification N-acetylmethionine. The segment at 146 to 192 (DKSSAANQNGNKSKSNSKVRTSEGKSSKTKQPKEEDEEIDEDDEDDH) is disordered. Residues 149–163 (SAANQNGNKSKSNSK) show a composition bias toward low complexity. The span at 179-192 (EEDEEIDEDDEDDH) shows a compositional bias: acidic residues. A PHD-type zinc finger spans residues 194 to 246 (ETLCGACGDSDGADEFWICCDLCEKWFHGKCVKITPARAEHIKQYKCPSCSNK).

It belongs to the Alfin family. As to expression, ubiquitously expressed.

The protein resides in the nucleus. Histone-binding component that specifically recognizes H3 tails trimethylated on 'Lys-4' (H3K4me3), which mark transcription start sites of virtually all active genes. The chain is PHD finger protein ALFIN-LIKE 3 (AL3) from Arabidopsis thaliana (Mouse-ear cress).